Here is a 167-residue protein sequence, read N- to C-terminus: SsrA-binding protein (167 aa).

The interval 139–167 (QAHDKRHAEKEREWQRDKQRIMRAHNRNA) is disordered. Over residues 144-158 (RHAEKEREWQRDKQR) the composition is skewed to basic and acidic residues.

This sequence belongs to the SmpB family.

The protein localises to the cytoplasm. Required for rescue of stalled ribosomes mediated by trans-translation. Binds to transfer-messenger RNA (tmRNA), required for stable association of tmRNA with ribosomes. tmRNA and SmpB together mimic tRNA shape, replacing the anticodon stem-loop with SmpB. tmRNA is encoded by the ssrA gene; the 2 termini fold to resemble tRNA(Ala) and it encodes a 'tag peptide', a short internal open reading frame. During trans-translation Ala-aminoacylated tmRNA acts like a tRNA, entering the A-site of stalled ribosomes, displacing the stalled mRNA. The ribosome then switches to translate the ORF on the tmRNA; the nascent peptide is terminated with the 'tag peptide' encoded by the tmRNA and targeted for degradation. The ribosome is freed to recommence translation, which seems to be the essential function of trans-translation. This Xylella fastidiosa (strain M23) protein is SsrA-binding protein.